Consider the following 393-residue polypeptide: Dual-specificity RNA methyltransferase RlmN (393 aa).

The Proton acceptor role is filled by Glu-114. One can recognise a Radical SAM core domain in the interval 120 to 359 (EGDRATLCVS…VIVRKTRGDD (240 aa)). A disulfide bridge links Cys-127 with Cys-364. 3 residues coordinate [4Fe-4S] cluster: Cys-134, Cys-138, and Cys-141. Residues 188 to 189 (GE), Ser-220, 242 to 244 (SLH), and Asn-321 contribute to the S-adenosyl-L-methionine site. Cys-364 functions as the S-methylcysteine intermediate in the catalytic mechanism.

Belongs to the radical SAM superfamily. RlmN family. The cofactor is [4Fe-4S] cluster.

Its subcellular location is the cytoplasm. It carries out the reaction adenosine(2503) in 23S rRNA + 2 reduced [2Fe-2S]-[ferredoxin] + 2 S-adenosyl-L-methionine = 2-methyladenosine(2503) in 23S rRNA + 5'-deoxyadenosine + L-methionine + 2 oxidized [2Fe-2S]-[ferredoxin] + S-adenosyl-L-homocysteine. It catalyses the reaction adenosine(37) in tRNA + 2 reduced [2Fe-2S]-[ferredoxin] + 2 S-adenosyl-L-methionine = 2-methyladenosine(37) in tRNA + 5'-deoxyadenosine + L-methionine + 2 oxidized [2Fe-2S]-[ferredoxin] + S-adenosyl-L-homocysteine. Specifically methylates position 2 of adenine 2503 in 23S rRNA and position 2 of adenine 37 in tRNAs. m2A2503 modification seems to play a crucial role in the proofreading step occurring at the peptidyl transferase center and thus would serve to optimize ribosomal fidelity. This is Dual-specificity RNA methyltransferase RlmN from Haemophilus ducreyi (strain 35000HP / ATCC 700724).